The chain runs to 579 residues: Type II restriction enzyme FokI (579 aa).

Active-site residues include Asp-450, Asp-467, and Lys-469.

In terms of assembly, monomer, in which form it can cleave DNA. Homodimer when bound to DNA. The cofactor is Mg(2+).

It carries out the reaction Endonucleolytic cleavage of DNA to give specific double-stranded fragments with terminal 5'-phosphates.. Its function is as follows. An S subtype restriction enzyme that recognizes the asymmetric double-stranded sequence 5'-GGATG-3' and cleaves respectively 14 bases after G-1 (top strand) and 13 bases before C-1 (bottom strand). In Planomicrobium okeanokoites (Planococcus okeanokoites), this protein is Type II restriction enzyme FokI.